The chain runs to 213 residues: Large ribosomal subunit protein uL3 (213 aa).

Belongs to the universal ribosomal protein uL3 family. As to quaternary structure, part of the 50S ribosomal subunit. Forms a cluster with proteins L14 and L19.

Its function is as follows. One of the primary rRNA binding proteins, it binds directly near the 3'-end of the 23S rRNA, where it nucleates assembly of the 50S subunit. In Bifidobacterium adolescentis (strain ATCC 15703 / DSM 20083 / NCTC 11814 / E194a), this protein is Large ribosomal subunit protein uL3.